The primary structure comprises 645 residues: COP9 signalosome complex subunit 10 (645 aa).

Residues 1–45 are compositionally biased toward acidic residues; that stretch reads MSDEDNNYDDFMLSDDEGMESIEMEEETDDEDKQNIEINEDNSQD. Residues 1–63 are disordered; it reads MSDEDNNYDD…HKQHEQGTFE (63 aa). Basic and acidic residues predominate over residues 46-63; the sequence is DQDRGAARHKQHEQGTFE. The 196-residue stretch at 348–543 folds into the PCI domain; sequence DLSFALMRYY…DLVYFGDENK (196 aa).

Component of a COP9 signalosome-like (CSN) complex, composed of at least RRI1/CSN5, CSN9, RRI2/CSN10, PCI8/CSN11, CSN12 and CSI1. In the complex, it probably interacts directly with CSN12.

It is found in the cytoplasm. The protein localises to the nucleus. Functionally, component of the COP9 signalosome (CSN) complex that acts as an regulator of the ubiquitin (Ubl) conjugation pathway by mediating the deneddylation of the cullin subunit of SCF-type E3 ubiquitin-protein ligase complexes. The CSN complex is involved in the regulation of the mating pheromone response. The polypeptide is COP9 signalosome complex subunit 10 (RRI2) (Saccharomyces cerevisiae (strain ATCC 204508 / S288c) (Baker's yeast)).